We begin with the raw amino-acid sequence, 687 residues long: MSVRYPLLNRELGILGFNERVLAQAADPQVPLLERLRFICITSSNLDEFFEVRMAGLQEQIRDNPGALTPDGMSLQHAYDLVVERAQRLVHRQYTMLHETVLPALEQEGIYFHAADTWNDEQLEWARRYFLDELLPVLTPIGLDPAHPFPRVLNKSLNFVVELEGRDAFGRQAVMGIVQAPRALPRVVRMPQALSGFEHGFVLLSTFMQRFVGELFPQLVVKSCNQFRITRNSELFVDEDEITNLRVALQGELPARHLGNAVRLEVSADTPAHIVRRLLEESLLDEKDCYRVAGSVNLVRLMQIPDLVDRPDLKFAPFTASIPPVIANAPAMFDAIDDGDILLHHPYESFQPVLELLQQAAKDPSVVAIKQTIYRTGTDSPLMDALMAAARNGKEVTVVVELLARFDEETNINWASQLEAVGAHVVYGVVGHKCHAKMMLIVRRVVEGGKATLRRYVHLGTGNYHPRTARLYTDFGLMTADQKICEDVHHVFQQLTGIGGELTLHELWQSPFTLHPRIIESIRAEIDNARAGKRARVVAKMNALLEPTVIAALYEASQAGVKVDLIVRGVCALKPGVPGLSENITVRSIVGRFLEHHRIYYFHADGAEEVYLSSADWMDRNLFRRVEVAFPIRERKLKRRVIAEGLSVCLGDNQSAWLMQSDGHYRRRRAGKTLRNAQLGLLAKFCS.

Asn45 is a binding site for ATP. Mg(2+)-binding residues include Arg375 and Arg405. His435 serves as the catalytic Phosphohistidine intermediate. Residues Tyr472, Arg568, and His596 each contribute to the ATP site.

The protein belongs to the polyphosphate kinase 1 (PPK1) family. The cofactor is Mg(2+). An intermediate of this reaction is the autophosphorylated ppk in which a phosphate is covalently linked to a histidine residue through a N-P bond.

It carries out the reaction [phosphate](n) + ATP = [phosphate](n+1) + ADP. In terms of biological role, catalyzes the reversible transfer of the terminal phosphate of ATP to form a long-chain polyphosphate (polyP). The protein is Polyphosphate kinase of Burkholderia ambifaria (strain ATCC BAA-244 / DSM 16087 / CCUG 44356 / LMG 19182 / AMMD) (Burkholderia cepacia (strain AMMD)).